Here is a 200-residue protein sequence, read N- to C-terminus: Probable nicotinate-nucleotide adenylyltransferase (200 aa).

Belongs to the NadD family.

The catalysed reaction is nicotinate beta-D-ribonucleotide + ATP + H(+) = deamido-NAD(+) + diphosphate. Its pathway is cofactor biosynthesis; NAD(+) biosynthesis; deamido-NAD(+) from nicotinate D-ribonucleotide: step 1/1. Functionally, catalyzes the reversible adenylation of nicotinate mononucleotide (NaMN) to nicotinic acid adenine dinucleotide (NaAD). This chain is Probable nicotinate-nucleotide adenylyltransferase, found in Clostridium novyi (strain NT).